The sequence spans 207 residues: ATP-dependent Clp protease proteolytic subunit (207 aa).

The active-site Nucleophile is Ser111. His136 is an active-site residue.

Belongs to the peptidase S14 family. In terms of assembly, fourteen ClpP subunits assemble into 2 heptameric rings which stack back to back to give a disk-like structure with a central cavity, resembling the structure of eukaryotic proteasomes.

It localises to the cytoplasm. The enzyme catalyses Hydrolysis of proteins to small peptides in the presence of ATP and magnesium. alpha-casein is the usual test substrate. In the absence of ATP, only oligopeptides shorter than five residues are hydrolyzed (such as succinyl-Leu-Tyr-|-NHMec, and Leu-Tyr-Leu-|-Tyr-Trp, in which cleavage of the -Tyr-|-Leu- and -Tyr-|-Trp bonds also occurs).. Cleaves peptides in various proteins in a process that requires ATP hydrolysis. Has a chymotrypsin-like activity. Plays a major role in the degradation of misfolded proteins. This chain is ATP-dependent Clp protease proteolytic subunit, found in Burkholderia mallei (strain ATCC 23344).